The following is a 189-amino-acid chain: Peptidyl-tRNA hydrolase (189 aa).

Tyr14 is a binding site for tRNA. The active-site Proton acceptor is His19. TRNA contacts are provided by Tyr64, Asn66, and Asn112.

This sequence belongs to the PTH family. Monomer.

Its subcellular location is the cytoplasm. It catalyses the reaction an N-acyl-L-alpha-aminoacyl-tRNA + H2O = an N-acyl-L-amino acid + a tRNA + H(+). Hydrolyzes ribosome-free peptidyl-tRNAs (with 1 or more amino acids incorporated), which drop off the ribosome during protein synthesis, or as a result of ribosome stalling. Its function is as follows. Catalyzes the release of premature peptidyl moieties from peptidyl-tRNA molecules trapped in stalled 50S ribosomal subunits, and thus maintains levels of free tRNAs and 50S ribosomes. The chain is Peptidyl-tRNA hydrolase from Clostridium botulinum (strain 657 / Type Ba4).